Here is a 128-residue protein sequence, read N- to C-terminus: Large ribosomal subunit protein bL17 (128 aa).

Belongs to the bacterial ribosomal protein bL17 family. As to quaternary structure, part of the 50S ribosomal subunit. Contacts protein L32.

This chain is Large ribosomal subunit protein bL17, found in Proteus mirabilis (strain HI4320).